The following is a 138-amino-acid chain: Transcription antitermination protein NusB (138 aa).

It belongs to the NusB family.

Functionally, involved in transcription antitermination. Required for transcription of ribosomal RNA (rRNA) genes. Binds specifically to the boxA antiterminator sequence of the ribosomal RNA (rrn) operons. The polypeptide is Transcription antitermination protein NusB (Coxiella burnetii (strain Dugway 5J108-111)).